The following is a 211-amino-acid chain: Peptide methionine sulfoxide reductase MsrA (211 aa).

Cys60 is an active-site residue.

The protein belongs to the MsrA Met sulfoxide reductase family.

The catalysed reaction is L-methionyl-[protein] + [thioredoxin]-disulfide + H2O = L-methionyl-(S)-S-oxide-[protein] + [thioredoxin]-dithiol. It catalyses the reaction [thioredoxin]-disulfide + L-methionine + H2O = L-methionine (S)-S-oxide + [thioredoxin]-dithiol. In terms of biological role, has an important function as a repair enzyme for proteins that have been inactivated by oxidation. Catalyzes the reversible oxidation-reduction of methionine sulfoxide in proteins to methionine. This is Peptide methionine sulfoxide reductase MsrA from Methanosarcina mazei (strain ATCC BAA-159 / DSM 3647 / Goe1 / Go1 / JCM 11833 / OCM 88) (Methanosarcina frisia).